The following is a 445-amino-acid chain: Phosphoglucosamine mutase (445 aa).

The Phosphoserine intermediate role is filled by Ser101. 4 residues coordinate Mg(2+): Ser101, Asp240, Asp242, and Asp244. Ser101 is subject to Phosphoserine.

This sequence belongs to the phosphohexose mutase family. It depends on Mg(2+) as a cofactor. Activated by phosphorylation.

The enzyme catalyses alpha-D-glucosamine 1-phosphate = D-glucosamine 6-phosphate. Catalyzes the conversion of glucosamine-6-phosphate to glucosamine-1-phosphate. The sequence is that of Phosphoglucosamine mutase from Pseudomonas fluorescens (strain SBW25).